Here is a 394-residue protein sequence, read N- to C-terminus: MSATKTSLYEQLTESSAAALAVKLGLFQSKSTLTCREIGDGNLNYVFHVYDKENKKGLIIKQAIPYAKVVGESWPLTIDRARIESSALIRQGEHVPHLVPAVYYSDTEMAVTVMEDLSHLRISRKGLLEGQHYPNLSAHIGEFLGKTLFYSSDYALDAKVKQQLAKQFTNPELCNITERLVFTEPFLDHETNDFEEELRPYAEKVWNNSRLKEGADELKAIFLNSAETLVHGDLHTGSIFADEHETKVIDPEFAFFGPIGFDIGQFIANLLLNALSRDGDDRQPLYDHTAAVWDTFVKTFSEAWEKDCLPSRRHLLEDTLKNAFEEAVGFAGCELIRRTIGLAHVADLDEITPFDKRIERKKLALDIGAYYIENRKELKHITEVLDQFKLRVKE.

Residues asparagine 44, lysine 61, and 115–117 (EDL) each bind ATP. Aspartate 233 serves as a coordination point for substrate. Position 250–252 (250–252 (DPE)) interacts with ATP. Residue arginine 337 coordinates substrate.

It belongs to the methylthioribose kinase family. Homodimer.

The enzyme catalyses 5-(methylsulfanyl)-D-ribose + ATP = 5-(methylsulfanyl)-alpha-D-ribose 1-phosphate + ADP + H(+). The protein operates within amino-acid biosynthesis; L-methionine biosynthesis via salvage pathway; S-methyl-5-thio-alpha-D-ribose 1-phosphate from S-methyl-5'-thioadenosine (hydrolase route): step 2/2. Its function is as follows. Catalyzes the phosphorylation of methylthioribose into methylthioribose-1-phosphate. The sequence is that of Methylthioribose kinase from Bacillus velezensis (strain DSM 23117 / BGSC 10A6 / LMG 26770 / FZB42) (Bacillus amyloliquefaciens subsp. plantarum).